The sequence spans 295 residues: NAD kinase (295 aa).

The active-site Proton acceptor is Asp-74. NAD(+)-binding positions include 74–75 (DG), 148–149 (NE), Arg-176, Asp-178, and 189–194 (TAYAMS).

The protein belongs to the NAD kinase family. A divalent metal cation is required as a cofactor.

The protein localises to the cytoplasm. It carries out the reaction NAD(+) + ATP = ADP + NADP(+) + H(+). Functionally, involved in the regulation of the intracellular balance of NAD and NADP, and is a key enzyme in the biosynthesis of NADP. Catalyzes specifically the phosphorylation on 2'-hydroxyl of the adenosine moiety of NAD to yield NADP. This chain is NAD kinase, found in Acidithiobacillus ferrooxidans (strain ATCC 23270 / DSM 14882 / CIP 104768 / NCIMB 8455) (Ferrobacillus ferrooxidans (strain ATCC 23270)).